A 151-amino-acid polypeptide reads, in one-letter code: Methylglyoxal synthase (151 aa).

Residues 6 to 151 (RVMPAHKHIA…DYDAYLAERV (146 aa)) enclose the MGS-like domain. Residues His-19, Lys-23, 45–48 (TGTT), and 65–66 (SG) contribute to the substrate site. Catalysis depends on Asp-71, which acts as the Proton donor/acceptor. A substrate-binding site is contributed by His-98.

This sequence belongs to the methylglyoxal synthase family.

The catalysed reaction is dihydroxyacetone phosphate = methylglyoxal + phosphate. In terms of biological role, catalyzes the formation of methylglyoxal from dihydroxyacetone phosphate. This is Methylglyoxal synthase from Aliivibrio fischeri (strain MJ11) (Vibrio fischeri).